The chain runs to 183 residues: CKLF-like MARVEL transmembrane domain-containing protein 6 (183 aa).

The residue at position 1 (Met-1) is an N-acetylmethionine. At 1-39 (MENGAVYSPTTEEDPGPARGPRSGLAAYFFMGRLPLLRR) the chain is on the cytoplasmic side. Ser-8 carries the phosphoserine modification. An MARVEL domain is found at 33-160 (RLPLLRRVLK…DFITMLYEKR (128 aa)). A helical membrane pass occupies residues 40 to 60 (VLKGLQLLLSLLAFICEEVVS). Topologically, residues 61-67 (QCTLCGG) are extracellular. A helical membrane pass occupies residues 68–88 (LYFFEFVSCSAFLLSLLILIV). The Cytoplasmic portion of the chain corresponds to 89 to 106 (YCTPFYERVDTTKVKSSD). The chain crosses the membrane as a helical span at residues 107–127 (FYITLGTGCVFLLASIIFVST). The Extracellular segment spans residues 128 to 134 (HDRTSAE). The helical transmembrane segment at 135–155 (IAAIVFGFIASFMFLLDFITM) threads the bilayer. Over 156–183 (LYEKRQESQLRKPENTTRAEALTEPLNA) the chain is Cytoplasmic. Position 171 is a phosphothreonine (Thr-171).

Belongs to the chemokine-like factor family. As to quaternary structure, interacts with PD-L1/CD274 (via transmembrane domain); the interaction is direct. Interacts with CMTM4. Interacts with CD58, ARG1, ENO1 and TMPO. Expressed in the leukocytes, placenta and testis.

It localises to the cell membrane. The protein localises to the early endosome membrane. The protein resides in the recycling endosome membrane. Functionally, master regulator of recycling and plasma membrane expression of PD-L1/CD274, an immune inhibitory ligand critical for immune tolerance to self and antitumor immunity. Associates with both constitutive and IFNG-induced PD-L1/CD274 at recycling endosomes, where it protects PD-L1/CD274 from being targeted for lysosomal degradation, likely by preventing its STUB1-mediated ubiquitination. May stabilize PD-L1/CD274 expression on antigen presenting cells and potentiates inhibitory signaling by PDCD1/CD279, its receptor on T-cells, ultimately triggering T-cell anergy. In Homo sapiens (Human), this protein is CKLF-like MARVEL transmembrane domain-containing protein 6.